Here is a 200-residue protein sequence, read N- to C-terminus: NADH-quinone oxidoreductase subunit C (200 aa).

The protein belongs to the complex I 30 kDa subunit family. NDH-1 is composed of 14 different subunits. Subunits NuoB, C, D, E, F, and G constitute the peripheral sector of the complex.

The protein resides in the cell inner membrane. It carries out the reaction a quinone + NADH + 5 H(+)(in) = a quinol + NAD(+) + 4 H(+)(out). In terms of biological role, NDH-1 shuttles electrons from NADH, via FMN and iron-sulfur (Fe-S) centers, to quinones in the respiratory chain. The immediate electron acceptor for the enzyme in this species is believed to be ubiquinone. Couples the redox reaction to proton translocation (for every two electrons transferred, four hydrogen ions are translocated across the cytoplasmic membrane), and thus conserves the redox energy in a proton gradient. The polypeptide is NADH-quinone oxidoreductase subunit C (Rhizobium johnstonii (strain DSM 114642 / LMG 32736 / 3841) (Rhizobium leguminosarum bv. viciae)).